Consider the following 329-residue polypeptide: RNA-binding protein CP33, chloroplastic (329 aa).

Residues methionine 1 to alanine 69 constitute a chloroplast transit peptide. Residues alanine 77–glutamate 104 show a composition bias toward acidic residues. Disordered stretches follow at residues alanine 77–arginine 117 and serine 296–alanine 329. 2 RRM domains span residues glycine 116–valine 194 and histidine 219–glutamate 297.

Its subcellular location is the plastid. It localises to the chloroplast. Could be involved in splicing and/or processing of chloroplast RNAs. The sequence is that of RNA-binding protein CP33, chloroplastic from Arabidopsis thaliana (Mouse-ear cress).